The chain runs to 176 residues: Adenine phosphoribosyltransferase (176 aa).

It belongs to the purine/pyrimidine phosphoribosyltransferase family. In terms of assembly, homodimer.

Its subcellular location is the cytoplasm. The catalysed reaction is AMP + diphosphate = 5-phospho-alpha-D-ribose 1-diphosphate + adenine. It participates in purine metabolism; AMP biosynthesis via salvage pathway; AMP from adenine: step 1/1. Its function is as follows. Catalyzes a salvage reaction resulting in the formation of AMP, that is energically less costly than de novo synthesis. The protein is Adenine phosphoribosyltransferase of Leuconostoc mesenteroides subsp. mesenteroides (strain ATCC 8293 / DSM 20343 / BCRC 11652 / CCM 1803 / JCM 6124 / NCDO 523 / NBRC 100496 / NCIMB 8023 / NCTC 12954 / NRRL B-1118 / 37Y).